A 148-amino-acid polypeptide reads, in one-letter code: Cytochrome c-552 (148 aa).

Positions methionine 1–alanine 17 are cleaved as a signal peptide. Glutamine 18 carries the pyrrolidone carboxylic acid modification. Heme c is bound by residues cysteine 28, cysteine 31, histidine 32, and methionine 86.

In terms of processing, binds 1 heme c group covalently per subunit.

This monoheme basic protein appears to function as an electron donor to cytochrome oxidase in T.thermophilus. This chain is Cytochrome c-552 (cycA), found in Thermus thermophilus (strain ATCC 27634 / DSM 579 / HB8).